The sequence spans 956 residues: Nitrogen regulatory protein NUT1 (956 aa).

Residues 1 to 12 show a composition bias toward basic and acidic residues; that stretch reads MNPTITEHDFRF. 5 disordered regions span residues 1 to 51, 120 to 222, 240 to 262, 348 to 373, and 524 to 661; these read MNPT…NDAQ, QQEE…PAAA, KTSI…FQVP, GQSI…SQVS, and TLPG…DAPT. Residues 15–37 are compositionally biased toward low complexity; that stretch reads RPAAPGRDPGSDSSDDPLPASLR. Polar residues-rich tracts occupy residues 42–51, 131–153, 167–194, and 208–217; these read DRQSAFNDAQ, PLKT…QKKS, SHGS…NAIS, and AAQSQFNPQS. Polar residues predominate over residues 588–613; it reads NASTTAIPNSQMQYEQQGVQGHTNSP. Low complexity-rich tracts occupy residues 623-633 and 640-661; these read SGFSSVVHSRP and SKNG…DAPT. The segment at 663 to 687 adopts a GATA-type zinc-finger fold; sequence CTNCATQTTPLWRRNPEGQPLCNAC. The tract at residues 708-890 is disordered; it reads KKRNRGSGSN…AATRPSGFGT (183 aa). Polar residues predominate over residues 713 to 760; the sequence is GSGSNVPGATSGSRSKKGATSTAVSGTNTRKNSSLAISRTASTTNVQV. Over residues 812-839 the composition is skewed to low complexity; the sequence is VVPIAAAPPKNMPGPGAAAAARTVALGP. Polar residues-rich tracts occupy residues 849-863 and 872-881; these read SPAN…NANH and PENSTGSNEA.

The protein localises to the nucleus. In terms of biological role, major nitrogen regulatory protein; activates expression of nitrogen-regulated genes. This chain is Nitrogen regulatory protein NUT1 (NUT1), found in Pyricularia oryzae (strain 70-15 / ATCC MYA-4617 / FGSC 8958) (Rice blast fungus).